The sequence spans 853 residues: DNA mismatch repair protein MutS (853 aa).

614 to 621 (GPNMGGKS) contacts ATP.

This sequence belongs to the DNA mismatch repair MutS family.

In terms of biological role, this protein is involved in the repair of mismatches in DNA. It is possible that it carries out the mismatch recognition step. This protein has a weak ATPase activity. This Escherichia coli O6:H1 (strain CFT073 / ATCC 700928 / UPEC) protein is DNA mismatch repair protein MutS.